Reading from the N-terminus, the 372-residue chain is Aminomethyltransferase (372 aa).

The protein belongs to the GcvT family. The glycine cleavage system is composed of four proteins: P, T, L and H.

It catalyses the reaction N(6)-[(R)-S(8)-aminomethyldihydrolipoyl]-L-lysyl-[protein] + (6S)-5,6,7,8-tetrahydrofolate = N(6)-[(R)-dihydrolipoyl]-L-lysyl-[protein] + (6R)-5,10-methylene-5,6,7,8-tetrahydrofolate + NH4(+). In terms of biological role, the glycine cleavage system catalyzes the degradation of glycine. This Paraburkholderia phymatum (strain DSM 17167 / CIP 108236 / LMG 21445 / STM815) (Burkholderia phymatum) protein is Aminomethyltransferase.